The sequence spans 210 residues: MQVKNPILGLCQKAKFALSAAKVEQCPDDQGYEVAFAGRSNAGKSSALNTLTHASLARTSKTPGRTQLLNFFSLDDERRLVDLPGYGYAKVPIPLKQHWQKHLEAYLGSRECLRGVILMMDVRHPMTDFDKMMLDWAKASSMPMHILLTKADKLTHGAGKNTLLKVQSEIRKGWGDGVTIQLFSAPKRLGVEDAYRVLADWMELEDKPVV.

Residues 30-204 (QGYEVAFAGR…YRVLADWMEL (175 aa)) enclose the EngB-type G domain. GTP contacts are provided by residues 38 to 45 (GRSNAGKS), 64 to 68 (GRTQL), 82 to 85 (DLPG), 149 to 152 (TKAD), and 182 to 185 (LFSA). Positions 45 and 66 each coordinate Mg(2+).

It belongs to the TRAFAC class TrmE-Era-EngA-EngB-Septin-like GTPase superfamily. EngB GTPase family. Mg(2+) serves as cofactor.

Its function is as follows. Necessary for normal cell division and for the maintenance of normal septation. This chain is Probable GTP-binding protein EngB, found in Pseudomonas putida (strain ATCC 47054 / DSM 6125 / CFBP 8728 / NCIMB 11950 / KT2440).